Here is a 555-residue protein sequence, read N- to C-terminus: Urocanate hydratase (555 aa).

Residues 51-52, Gln-129, 175-177, Glu-195, 241-242, 262-266, 272-273, and Tyr-321 contribute to the NAD(+) site; these read GG, GMG, NA, QTSAH, and YL. Cys-409 is an active-site residue. Gly-491 contributes to the NAD(+) binding site.

It belongs to the urocanase family. Requires NAD(+) as cofactor.

It is found in the cytoplasm. The enzyme catalyses 4-imidazolone-5-propanoate = trans-urocanate + H2O. It participates in amino-acid degradation; L-histidine degradation into L-glutamate; N-formimidoyl-L-glutamate from L-histidine: step 2/3. Functionally, catalyzes the conversion of urocanate to 4-imidazolone-5-propionate. The chain is Urocanate hydratase from Hyphomonas neptunium (strain ATCC 15444).